Here is a 472-residue protein sequence, read N- to C-terminus: Siroheme synthase 1 (472 aa).

Residues 1–203 are precorrin-2 dehydrogenase /sirohydrochlorin ferrochelatase; that stretch reads MDYLPLFADL…GQLTEAENEL (203 aa). Residues 22–23 and 43–44 contribute to the NAD(+) site; these read EV and QT. Serine 128 carries the phosphoserine modification. Positions 215-472 are uroporphyrinogen-III C-methyltransferase; it reads GEVALVGAGP…AISPSVVNLA (258 aa). An S-adenosyl-L-methionine-binding site is contributed by proline 224. The active-site Proton acceptor is aspartate 247. Lysine 269 acts as the Proton donor in catalysis. S-adenosyl-L-methionine is bound by residues 300-302, isoleucine 305, 330-331, methionine 382, and glycine 411; these read GGD and TA.

It in the N-terminal section; belongs to the precorrin-2 dehydrogenase / sirohydrochlorin ferrochelatase family. This sequence in the C-terminal section; belongs to the precorrin methyltransferase family.

It catalyses the reaction uroporphyrinogen III + 2 S-adenosyl-L-methionine = precorrin-2 + 2 S-adenosyl-L-homocysteine + H(+). The catalysed reaction is precorrin-2 + NAD(+) = sirohydrochlorin + NADH + 2 H(+). The enzyme catalyses siroheme + 2 H(+) = sirohydrochlorin + Fe(2+). It functions in the pathway cofactor biosynthesis; adenosylcobalamin biosynthesis; precorrin-2 from uroporphyrinogen III: step 1/1. The protein operates within cofactor biosynthesis; adenosylcobalamin biosynthesis; sirohydrochlorin from precorrin-2: step 1/1. Its pathway is porphyrin-containing compound metabolism; siroheme biosynthesis; precorrin-2 from uroporphyrinogen III: step 1/1. It participates in porphyrin-containing compound metabolism; siroheme biosynthesis; siroheme from sirohydrochlorin: step 1/1. It functions in the pathway porphyrin-containing compound metabolism; siroheme biosynthesis; sirohydrochlorin from precorrin-2: step 1/1. Multifunctional enzyme that catalyzes the SAM-dependent methylations of uroporphyrinogen III at position C-2 and C-7 to form precorrin-2 via precorrin-1. Then it catalyzes the NAD-dependent ring dehydrogenation of precorrin-2 to yield sirohydrochlorin. Finally, it catalyzes the ferrochelation of sirohydrochlorin to yield siroheme. This chain is Siroheme synthase 1, found in Yersinia pseudotuberculosis serotype I (strain IP32953).